The primary structure comprises 197 residues: Rac-like GTP-binding protein 5 (197 aa).

13–20 (GDGAVGKT) serves as a coordination point for GTP. Positions 35–43 (YVPTVFDNF) match the Effector region motif. Residues 60-64 (DTAGQ) and 118-121 (TKLD) contribute to the GTP site. Cysteine 194 bears the Cysteine methyl ester mark. Cysteine 194 carries S-geranylgeranyl cysteine lipidation. The propeptide at 195 to 197 (AIL) is removed in mature form.

Belongs to the small GTPase superfamily. Rho family.

The protein resides in the cytoplasm. The protein localises to the membrane. Functionally, inactive GDP-bound Rho GTPases reside in the cytosol, are found in a complex with Rho GDP-dissociation inhibitors (Rho GDIs), and are released from the GDI protein in order to translocate to membranes upon activation. This chain is Rac-like GTP-binding protein 5 (RAC5), found in Oryza sativa subsp. japonica (Rice).